The sequence spans 325 residues: Brain mitochondrial carrier protein 1 (325 aa).

The next 6 membrane-spanning stretches (helical) occupy residues 38–54, 112–128, 141–161, 199–215, 240–256, and 298–315; these read GLNW…SIVA, LRQA…YQSL, LLIN…IANP, GVVP…GVEL, VSSF…SNPV, and GFWP…IFFI. Solcar repeat units lie at residues 42–131, 139–224, and 233–323; these read KPFV…LKRL, ETLL…TKKH, and DTIL…LKRL.

Belongs to the mitochondrial carrier (TC 2.A.29) family. As to quaternary structure, homotetramer. As to expression, mainly expressed in brain. Some expression in testis and pituitary.

It is found in the mitochondrion inner membrane. It catalyses the reaction sulfite(in) + sulfate(out) = sulfite(out) + sulfate(in). The enzyme catalyses thiosulfate(in) + sulfate(out) = thiosulfate(out) + sulfate(in). The catalysed reaction is sulfate(out) + phosphate(in) = sulfate(in) + phosphate(out). It carries out the reaction oxalate(in) + sulfate(out) = oxalate(out) + sulfate(in). It catalyses the reaction malonate(in) + sulfate(out) = malonate(out) + sulfate(in). The enzyme catalyses maleate(in) + sulfate(out) = maleate(out) + sulfate(in). The catalysed reaction is (S)-malate(in) + sulfate(out) = (S)-malate(out) + sulfate(in). It carries out the reaction (3S)-citramalate(in) + sulfate(out) = (3S)-citramalate(out) + sulfate(in). It catalyses the reaction (3R)-citramalate(in) + sulfate(out) = (3R)-citramalate(out) + sulfate(in). The enzyme catalyses sulfate(out) + succinate(in) = sulfate(in) + succinate(out). The catalysed reaction is (S,S)-tartrate(in) + sulfate(out) = (S,S)-tartrate(out) + sulfate(in). It carries out the reaction (2R,3R)-tartrate(in) + sulfate(out) = (2R,3R)-tartrate(out) + sulfate(in). It catalyses the reaction D-aspartate(in) + sulfate(out) = D-aspartate(out) + sulfate(in). The enzyme catalyses L-aspartate(in) + sulfate(out) = L-aspartate(out) + sulfate(in). The catalysed reaction is sulfate(in) = sulfate(out). It carries out the reaction phosphate(in) = phosphate(out). It catalyses the reaction (S)-malate(out) = (S)-malate(in). The enzyme catalyses citrate(in) = citrate(out). The catalysed reaction is L-aspartate(out) = L-aspartate(in). It carries out the reaction L-glutamate(out) = L-glutamate(in). It catalyses the reaction H(+)(in) = H(+)(out). The enzyme catalyses chloride(in) = chloride(out). Increased activity at pH lower than 8.0. sulfate/sulfate exchange activity is inhibited strongly by pyridoxal 5'-phosphate, bathophenanthroline and the organic mercurials mersalyl, p-chloromercuribenzoate and HgCl2. Proton conductance is activated by cardiolipin and long-chain free fatty acids and inhibited by purine nucleotides ATP and ADP. Chloride ion transporter activity is inhibited by long-chain free fatty acids. Functionally, transports inorganic anions (sulfate, sulfite, thiosulfate and phosphate) and, to a lesser extent, a variety of dicarboxylates (e.g. malonate, malate and citramalate) and, even more so, aspartate and glutamate and tricarboxylates. May catalyze the export of sulfite and thiosulfate (the hydrogen sulfide degradation products) from the mitochondria, thereby modulating the level of the hydrogen sulfide. Also can mediate a very low unidirectional transport of anions including sulfate, phosphate, (S)-malate, citrate, L-aspartate and L-glutamate. Maintains oxidative balance (through uncoupling activities) and ATP production (by modifying mitochondrial membrane potential). Is able to transport protons across lipid membranes. Also exhibits transmembrane chloride transport activity to a lesser extent. May modify mitochondrial respiratory efficiency and mitochondrial oxidant production. This is Brain mitochondrial carrier protein 1 from Homo sapiens (Human).